A 558-amino-acid polypeptide reads, in one-letter code: Inositol-3-phosphate synthase (558 aa).

The disordered stretch occupies residues 1–34; the sequence is MSPTALDACDHHDSFSLPAQDQSKVHPSARRTPE. Residues Gly99, Gly100, Asn101, Asn102, Asp174, Ser210, Ile211, Gln221, Arg224, Thr262, Ala263, Asn264, Thr265, Gly313, Ser314, Asp338, Ser341, Asn372, Asn373, Asp374, Lys387, Gly439, Asp440, Asp468, and Ser469 each contribute to the NAD(+) site.

The protein belongs to the myo-inositol 1-phosphate synthase family. Homotetramer. The cofactor is NAD(+).

It is found in the cytoplasm. The catalysed reaction is D-glucose 6-phosphate = 1D-myo-inositol 3-phosphate. It participates in polyol metabolism; myo-inositol biosynthesis; myo-inositol from D-glucose 6-phosphate: step 1/2. Key enzyme in myo-inositol biosynthesis pathway that catalyzes the conversion of glucose 6-phosphate to 1-myo-inositol 1-phosphate in a NAD-dependent manner. Rate-limiting enzyme in the synthesis of all inositol-containing compounds. This chain is Inositol-3-phosphate synthase, found in Cryptococcus neoformans var. grubii serotype A (strain H99 / ATCC 208821 / CBS 10515 / FGSC 9487) (Filobasidiella neoformans var. grubii).